Reading from the N-terminus, the 156-residue chain is Aspartate 1-decarboxylase (156 aa).

S26 (schiff-base intermediate with substrate; via pyruvic acid) is an active-site residue. The residue at position 26 (S26) is a Pyruvic acid (Ser). Position 58 (T58) interacts with substrate. The active-site Proton donor is Y59. G74–A76 lines the substrate pocket.

Belongs to the PanD family. As to quaternary structure, heterooctamer of four alpha and four beta subunits. Pyruvate serves as cofactor. Post-translationally, is synthesized initially as an inactive proenzyme, which is activated by self-cleavage at a specific serine bond to produce a beta-subunit with a hydroxyl group at its C-terminus and an alpha-subunit with a pyruvoyl group at its N-terminus.

It localises to the cytoplasm. It carries out the reaction L-aspartate + H(+) = beta-alanine + CO2. It functions in the pathway cofactor biosynthesis; (R)-pantothenate biosynthesis; beta-alanine from L-aspartate: step 1/1. In terms of biological role, catalyzes the pyruvoyl-dependent decarboxylation of aspartate to produce beta-alanine. The protein is Aspartate 1-decarboxylase of Gloeothece citriformis (strain PCC 7424) (Cyanothece sp. (strain PCC 7424)).